We begin with the raw amino-acid sequence, 166 residues long: MTDANGAPAEAAPQIRMQVLAQYVRDMSFENMVAQKGLQGGDVQPDIQVQVSLDARKRSVEHQYEVITKFKVTSKNKSGAAETLFLMELDYGGIFHVENVPEEQMHPFLLIECPRLLFPFVRRIISDVTRDGGFPPLNIDTVDFLALYRMELARRAEAQKAAQPVQ.

Belongs to the SecB family. Homotetramer, a dimer of dimers. One homotetramer interacts with 1 SecA dimer.

It is found in the cytoplasm. In terms of biological role, one of the proteins required for the normal export of preproteins out of the cell cytoplasm. It is a molecular chaperone that binds to a subset of precursor proteins, maintaining them in a translocation-competent state. It also specifically binds to its receptor SecA. This is Protein-export protein SecB from Cereibacter sphaeroides (strain ATCC 17025 / ATH 2.4.3) (Rhodobacter sphaeroides).